Here is a 234-residue protein sequence, read N- to C-terminus: Peptidyl-prolyl cis-trans isomerase FKBP17-3, chloroplastic (234 aa).

A chloroplast-targeting transit peptide spans 1–28 (MATLFTATVPSHHRFVSPSQHPKQSLLS). In terms of domain architecture, PPIase FKBP-type spans 130–228 (GYLVVFDVKG…DYIIEVDTVY (99 aa)).

This sequence belongs to the FKBP-type PPIase family.

Its subcellular location is the plastid. The protein localises to the chloroplast thylakoid lumen. It catalyses the reaction [protein]-peptidylproline (omega=180) = [protein]-peptidylproline (omega=0). PPIases accelerate the folding of proteins. It catalyzes the cis-trans isomerization of proline imidic peptide bonds in oligopeptides. The polypeptide is Peptidyl-prolyl cis-trans isomerase FKBP17-3, chloroplastic (FKBP17-3) (Arabidopsis thaliana (Mouse-ear cress)).